Reading from the N-terminus, the 417-residue chain is Phosphoglycerate kinase (417 aa).

(2R)-3-phosphoglycerate is bound by residues V23, D24, F25, N26, Q39, R40, S63, H64, G66, R67, L122, R123, H170, and R171. Position 214 (G214) interacts with ADP. Residue G214 coordinates CDP. Residues A215 and K216 each coordinate AMP. A215 serves as a coordination point for ATP. Mg(2+) is bound at residue A215. D219 contacts CDP. D219 provides a ligand contact to Mg(2+). Residue K220 participates in AMP binding. K220 is an ATP binding site. G238 is a binding site for ADP. Residue G238 coordinates CDP. 2 residues coordinate AMP: A239 and G313. Residues A239 and G313 each coordinate ATP. G338 and F343 together coordinate CDP. F343 lines the ADP pocket. E344 is a binding site for AMP. Residues E344, D375, and T376 each contribute to the ATP site. D375 serves as a coordination point for Mg(2+).

This sequence belongs to the phosphoglycerate kinase family. In terms of assembly, monomer. Requires Mg(2+) as cofactor.

It localises to the cytoplasm. The protein resides in the mitochondrion. It carries out the reaction (2R)-3-phosphoglycerate + ATP = (2R)-3-phospho-glyceroyl phosphate + ADP. It functions in the pathway carbohydrate degradation; glycolysis; pyruvate from D-glyceraldehyde 3-phosphate: step 2/5. Catalyzes one of the two ATP producing reactions in the glycolytic pathway via the reversible conversion of 1,3-diphosphoglycerate to 3-phosphoglycerate. Both L- and D- forms of purine and pyrimidine nucleotides can be used as substrates, but the activity is much lower on pyrimidines. Negatively regulates the biosynthesis of acetyl-CoA from pyruvate in the mitochondrion. This is Phosphoglycerate kinase (pgkA) from Aspergillus oryzae (strain ATCC 42149 / RIB 40) (Yellow koji mold).